Consider the following 296-residue polypeptide: Ribosomal RNA small subunit methyltransferase A (296 aa).

6 residues coordinate S-adenosyl-L-methionine: N30, L32, G57, E78, D103, and N128.

The protein belongs to the class I-like SAM-binding methyltransferase superfamily. rRNA adenine N(6)-methyltransferase family. RsmA subfamily.

The protein localises to the cytoplasm. It catalyses the reaction adenosine(1518)/adenosine(1519) in 16S rRNA + 4 S-adenosyl-L-methionine = N(6)-dimethyladenosine(1518)/N(6)-dimethyladenosine(1519) in 16S rRNA + 4 S-adenosyl-L-homocysteine + 4 H(+). In terms of biological role, specifically dimethylates two adjacent adenosines (A1518 and A1519) in the loop of a conserved hairpin near the 3'-end of 16S rRNA in the 30S particle. May play a critical role in biogenesis of 30S subunits. This Staphylococcus epidermidis (strain ATCC 35984 / DSM 28319 / BCRC 17069 / CCUG 31568 / BM 3577 / RP62A) protein is Ribosomal RNA small subunit methyltransferase A.